The following is a 230-amino-acid chain: Large ribosomal subunit protein uL1c (230 aa).

It belongs to the universal ribosomal protein uL1 family. As to quaternary structure, part of the 50S ribosomal subunit.

Its subcellular location is the plastid. The protein resides in the chloroplast. Functionally, binds directly to 23S rRNA. Might be involved in E site tRNA release (Potential). This Phaeodactylum tricornutum (strain CCAP 1055/1) protein is Large ribosomal subunit protein uL1c (rpl1).